We begin with the raw amino-acid sequence, 212 residues long: Small ribosomal subunit protein eS1 (212 aa).

This sequence belongs to the eukaryotic ribosomal protein eS1 family.

This is Small ribosomal subunit protein eS1 from Ignicoccus hospitalis (strain KIN4/I / DSM 18386 / JCM 14125).